A 308-amino-acid polypeptide reads, in one-letter code: Protein translocase subunit SecF (308 aa).

A run of 6 helical transmembrane segments spans residues serine 28–isoleucine 48, isoleucine 140–valine 160, tryptophan 164–phenylalanine 184, leucine 194–isoleucine 214, isoleucine 246–alanine 266, and valine 272–isoleucine 292.

This sequence belongs to the SecD/SecF family. SecF subfamily. Forms a complex with SecD. Part of the essential Sec protein translocation apparatus which comprises SecA, SecYEG and auxiliary proteins SecDF-YajC and YidC.

It is found in the cell inner membrane. In terms of biological role, part of the Sec protein translocase complex. Interacts with the SecYEG preprotein conducting channel. SecDF uses the proton motive force (PMF) to complete protein translocation after the ATP-dependent function of SecA. The polypeptide is Protein translocase subunit SecF (Rickettsia conorii (strain ATCC VR-613 / Malish 7)).